We begin with the raw amino-acid sequence, 223 residues long: Phosphoribosylformylglycinamidine synthase subunit PurQ (223 aa).

The region spanning 3 to 223 (FAVLVFPGSN…MVKSWREQHV (221 aa)) is the Glutamine amidotransferase type-1 domain. Cys-85 (nucleophile) is an active-site residue. Active-site residues include His-193 and Glu-195.

Part of the FGAM synthase complex composed of 1 PurL, 1 PurQ and 2 PurS subunits.

The protein resides in the cytoplasm. It carries out the reaction N(2)-formyl-N(1)-(5-phospho-beta-D-ribosyl)glycinamide + L-glutamine + ATP + H2O = 2-formamido-N(1)-(5-O-phospho-beta-D-ribosyl)acetamidine + L-glutamate + ADP + phosphate + H(+). The enzyme catalyses L-glutamine + H2O = L-glutamate + NH4(+). Its pathway is purine metabolism; IMP biosynthesis via de novo pathway; 5-amino-1-(5-phospho-D-ribosyl)imidazole from N(2)-formyl-N(1)-(5-phospho-D-ribosyl)glycinamide: step 1/2. Its function is as follows. Part of the phosphoribosylformylglycinamidine synthase complex involved in the purines biosynthetic pathway. Catalyzes the ATP-dependent conversion of formylglycinamide ribonucleotide (FGAR) and glutamine to yield formylglycinamidine ribonucleotide (FGAM) and glutamate. The FGAM synthase complex is composed of three subunits. PurQ produces an ammonia molecule by converting glutamine to glutamate. PurL transfers the ammonia molecule to FGAR to form FGAM in an ATP-dependent manner. PurS interacts with PurQ and PurL and is thought to assist in the transfer of the ammonia molecule from PurQ to PurL. The chain is Phosphoribosylformylglycinamidine synthase subunit PurQ from Staphylococcus aureus (strain USA300).